The primary structure comprises 98 residues: NADH-ubiquinone oxidoreductase chain 4L (98 aa).

3 consecutive transmembrane segments (helical) span residues 1-21 (MSLTYMNMFMAFTISLLGLLL), 29-49 (SLLCLEGMMLSLFVMMTMTIL), and 61-81 (IILLVFAACEAALGLSLLVMV).

It belongs to the complex I subunit 4L family. As to quaternary structure, core subunit of respiratory chain NADH dehydrogenase (Complex I) which is composed of 45 different subunits.

It is found in the mitochondrion inner membrane. The catalysed reaction is a ubiquinone + NADH + 5 H(+)(in) = a ubiquinol + NAD(+) + 4 H(+)(out). Core subunit of the mitochondrial membrane respiratory chain NADH dehydrogenase (Complex I) which catalyzes electron transfer from NADH through the respiratory chain, using ubiquinone as an electron acceptor. Part of the enzyme membrane arm which is embedded in the lipid bilayer and involved in proton translocation. In Vampyrodes caraccioli (Great stripe-faced bat), this protein is NADH-ubiquinone oxidoreductase chain 4L (MT-ND4L).